Consider the following 778-residue polypeptide: MKTRYSVLSVAMTAAFYTQYAQADLREQCLLGVPHFQGEEVTGDQIMMPIEIEADNAVINQPKDATYTGDVAIKQGNRSLFADEVRVEQNGEQERRAFLKGSYRYQDNLIQAHGRDAAMDLGSETAELQNTEFQLVGRQGRGTAESGSFNHNKRILKNATFTACLPNDNAWSIEGNEMIQHIDEEYAEIWHARFKVLGMPVFYSPYLQFPIGDRRRSGLLIPNFHRSSKDGFAYSQPFYWNIAPNMDATITPTYYSRRGWQISPEYRYLTKLGEGIVAGEYIGKDRLDEYRPDDNNRKRYLMHWRHNMSFLTGWRLYVDYTKVSDKRYFSDFDSEYGSSTDGYATQQFKLGYYQPNYNLSISGKKFQTFDELDVGPYRVLPQIDFNYYNDELVKGGDFKLFAQTARFENDSKLMPKAWRFHVEPTLNFPLANRYGSLNFETKLYATHYLQEKGSSKQADDMDKNVTRIIPQVKVDLQTVLEADKQLFKGFNQTFEPRVQYVYRPYKDQSNIGSGLNQSVSFGYDSALLQSDYFSLFNDRRYSGLDRISSANLITAGGTNRFFNEKTGVEVFNFSIGQTYYLSPSKIDDLSQNSTTKRSSSWALESNWKFHRKWNWHGAYQYDTRLNQTSLANTSLQYKPSQDKLVQLSYRFASKDYINQNLRSNTYGQDIKQVGAVVGWELTDRVAFMASHYHDIALKKPVESQLSVNYNTCCWSANVYVARKLTATPIGSPDTINDLYYDNKFGVNFELRFGTNYSSGVRKMLKKGMIPYTEQYGIN.

A signal peptide spans 1 to 23; it reads MKTRYSVLSVAMTAAFYTQYAQA.

The protein belongs to the LptD family. As to quaternary structure, component of the lipopolysaccharide transport and assembly complex. Interacts with LptE and LptA.

Its subcellular location is the cell outer membrane. In terms of biological role, together with LptE, is involved in the assembly of lipopolysaccharide (LPS) at the surface of the outer membrane. The chain is LPS-assembly protein LptD from Actinobacillus pleuropneumoniae serotype 7 (strain AP76).